Reading from the N-terminus, the 438-residue chain is AP-2 complex subunit mu (438 aa).

The MHD domain maps to 177-437; that stretch reads KNEVFLDIVE…ITKAGSYEIR (261 aa).

This sequence belongs to the adaptor complexes medium subunit family. Adaptor protein complex 2 (AP-2) is a heterotetramer composed of two large adaptins (alpha-type and beta-type subunits), a medium adaptin (mu-type subunit) and a small adaptin (sigma-type subunit).

It localises to the cell membrane. The protein localises to the membrane. It is found in the coated pit. Its subcellular location is the golgi apparatus. The protein resides in the trans-Golgi network membrane. Functionally, subunit of the adaptor protein complex 2 (AP-2). Adaptor protein complexes function in protein transport via transport vesicles in different membrane traffic pathways. Adaptor protein complexes are vesicle coat components and appear to be involved in cargo selection and vesicle formation. AP-2 is involved in clathrin-dependent endocytosis in which cargo proteins are incorporated into vesicles surrounded by clathrin (clathrin-coated vesicles, CCVs) which are destined for fusion with the early endosome. AP-2 recognizes Y-X-X-Phi endocytosis signal motif within the cytosolic tails of transmembrane cargo molecules. The complex binds polyphosphoinositides. This Arabidopsis thaliana (Mouse-ear cress) protein is AP-2 complex subunit mu (AP2M).